Here is a 419-residue protein sequence, read N- to C-terminus: Putative actin-fragmin kinase DDB_G0279609 (419 aa).

The disordered stretch occupies residues 73 to 94; the sequence is INNNNNSINNNNNNNNKNKNKN.

The protein belongs to the protein kinase superfamily. AFK Ser/Thr protein kinase family.

The protein is Putative actin-fragmin kinase DDB_G0279609 of Dictyostelium discoideum (Social amoeba).